Reading from the N-terminus, the 247-residue chain is Triosephosphate isomerase (247 aa).

9–11 (NWK) is a binding site for substrate. His94 serves as the catalytic Electrophile. Catalysis depends on Glu166, which acts as the Proton acceptor. Residues Gly172, Ser211, and 232 to 233 (GG) each bind substrate.

It belongs to the triosephosphate isomerase family. As to quaternary structure, homodimer.

The protein resides in the cytoplasm. The catalysed reaction is D-glyceraldehyde 3-phosphate = dihydroxyacetone phosphate. It functions in the pathway carbohydrate biosynthesis; gluconeogenesis. The protein operates within carbohydrate degradation; glycolysis; D-glyceraldehyde 3-phosphate from glycerone phosphate: step 1/1. Involved in the gluconeogenesis. Catalyzes stereospecifically the conversion of dihydroxyacetone phosphate (DHAP) to D-glyceraldehyde-3-phosphate (G3P). This Cupriavidus taiwanensis (strain DSM 17343 / BCRC 17206 / CCUG 44338 / CIP 107171 / LMG 19424 / R1) (Ralstonia taiwanensis (strain LMG 19424)) protein is Triosephosphate isomerase.